We begin with the raw amino-acid sequence, 89 residues long: Small ribosomal subunit protein uS15 (89 aa).

The protein belongs to the universal ribosomal protein uS15 family. Part of the 30S ribosomal subunit. Forms a bridge to the 50S subunit in the 70S ribosome, contacting the 23S rRNA.

Its function is as follows. One of the primary rRNA binding proteins, it binds directly to 16S rRNA where it helps nucleate assembly of the platform of the 30S subunit by binding and bridging several RNA helices of the 16S rRNA. In terms of biological role, forms an intersubunit bridge (bridge B4) with the 23S rRNA of the 50S subunit in the ribosome. This is Small ribosomal subunit protein uS15 from Prochlorococcus marinus (strain MIT 9515).